The sequence spans 202 residues: Ion-translocating oxidoreductase complex subunit G (202 aa).

Residues A11 to L31 form a helical membrane-spanning segment. T177 is subject to FMN phosphoryl threonine.

This sequence belongs to the RnfG family. In terms of assembly, the complex is composed of six subunits: RnfA, RnfB, RnfC, RnfD, RnfE and RnfG. It depends on FMN as a cofactor.

Its subcellular location is the cell inner membrane. Its function is as follows. Part of a membrane-bound complex that couples electron transfer with translocation of ions across the membrane. In Pasteurella multocida (strain Pm70), this protein is Ion-translocating oxidoreductase complex subunit G.